The primary structure comprises 141 residues: Small ribosomal subunit protein uS12 (141 aa).

Position 89 is a 3-methylthioaspartic acid (Asp89). Residues 104-141 (ASGAVGPSNTNKLNRNVSRSKYGVKRPKAGAKPASKAK) form a disordered region. Residues 110–122 (PSNTNKLNRNVSR) are compositionally biased toward polar residues. Residues 125 to 141 (YGVKRPKAGAKPASKAK) show a composition bias toward basic residues.

It belongs to the universal ribosomal protein uS12 family. As to quaternary structure, part of the 30S ribosomal subunit. Contacts proteins S8 and S17. May interact with IF1 in the 30S initiation complex.

In terms of biological role, with S4 and S5 plays an important role in translational accuracy. Its function is as follows. Interacts with and stabilizes bases of the 16S rRNA that are involved in tRNA selection in the A site and with the mRNA backbone. Located at the interface of the 30S and 50S subunits, it traverses the body of the 30S subunit contacting proteins on the other side and probably holding the rRNA structure together. The combined cluster of proteins S8, S12 and S17 appears to hold together the shoulder and platform of the 30S subunit. In Methylacidiphilum infernorum (isolate V4) (Methylokorus infernorum (strain V4)), this protein is Small ribosomal subunit protein uS12.